The following is a 679-amino-acid chain: DNA-directed RNA polymerase subunit beta' (679 aa).

Residues cysteine 69, cysteine 71, cysteine 84, and cysteine 87 each contribute to the Zn(2+) site. Mg(2+) contacts are provided by aspartate 486, aspartate 488, and aspartate 490.

It belongs to the RNA polymerase beta' chain family. RpoC1 subfamily. In plastids the minimal PEP RNA polymerase catalytic core is composed of four subunits: alpha, beta, beta', and beta''. When a (nuclear-encoded) sigma factor is associated with the core the holoenzyme is formed, which can initiate transcription. It depends on Mg(2+) as a cofactor. The cofactor is Zn(2+).

It localises to the plastid. The protein resides in the chloroplast. The catalysed reaction is RNA(n) + a ribonucleoside 5'-triphosphate = RNA(n+1) + diphosphate. In terms of biological role, DNA-dependent RNA polymerase catalyzes the transcription of DNA into RNA using the four ribonucleoside triphosphates as substrates. This chain is DNA-directed RNA polymerase subunit beta', found in Physcomitrium patens (Spreading-leaved earth moss).